The sequence spans 457 residues: Toxin and drug export protein A (457 aa).

Residues 1–23 (MFTIKKLTLTIVVATTLTGCANI) form the signal peptide.

The protein belongs to the outer membrane factor (OMF) (TC 1.B.17) family. In terms of assembly, homotrimer. Probably part of a complex composed of LtxB, LtxD and TdeA, which forms a single transport channel across the two membranes.

It is found in the cell outer membrane. In terms of biological role, required for secretion of the LtxA leukotoxin and resistance to various antimicrobial compounds. The polypeptide is Toxin and drug export protein A (Aggregatibacter actinomycetemcomitans (Actinobacillus actinomycetemcomitans)).